The primary structure comprises 717 residues: CRISPR-associated protein Cas8b (717 aa).

Disordered regions lie at residues 263–283 (IGVF…DQSW) and 698–717 (HEKE…STTN). Positions 701-717 (EDEDDQDTEEPAESTTN) are enriched in acidic residues.

Its subcellular location is the cytoplasm. Its function is as follows. CRISPR (clustered regularly interspaced short palindromic repeat) is an adaptive immune system that provides protection against mobile genetic elements (viruses, transposable elements and conjugative plasmids). CRISPR clusters contain sequences complementary to antecedent mobile elements and target invading nucleic acids. CRISPR clusters are transcribed and processed into CRISPR RNA (crRNA). Plasmid targeted by CRISPR locus P1 transform wild-type cells very poorly. This subunit might be involved in stabilizing crRNA. The chain is CRISPR-associated protein Cas8b from Haloferax volcanii (strain ATCC 29605 / DSM 3757 / JCM 8879 / NBRC 14742 / NCIMB 2012 / VKM B-1768 / DS2) (Halobacterium volcanii).